Reading from the N-terminus, the 400-residue chain is MSDIISIKDIDLAKKKVFIRCDFNVPQDDFLNITDDRRIRSAIPTIRYCLDNGCSVILASHLGRPKEISSKYSLEPVAKRLARLLDKEIVMAKDVIGEDAKTKAMNLKVGEILLLENLRFEKGETKNDENLAKELASMVQVYINDAFGVCHRAHSSVEAITKFFDEKHKGAGFLLQKEIDFASNLIKHPARPFVAVVGGSKVSGKLQALTNLLPKVDKLIIGGGMAFTFLKALGYDIGNSLLEEELLEEANKILTKGKNLGVKIYLPVDVVAAPACSQDVPMKFVPAQEIPNGWMGLDIGPASVRLFKEVISDAQTIWWNGPMGVFEIDKFSKGSIKMSHYISEGHATSVVGGGDTADVVARAGDADEMTFISTGGGASLELIEGKELPGVKALRSKENE.

Substrate-binding positions include 22 to 24 (DFN), R38, 61 to 64 (HLGR), R119, and R152. Residues K205, G296, E327, and 353–356 (GGDT) each bind ATP.

The protein belongs to the phosphoglycerate kinase family. In terms of assembly, monomer.

It is found in the cytoplasm. The enzyme catalyses (2R)-3-phosphoglycerate + ATP = (2R)-3-phospho-glyceroyl phosphate + ADP. It functions in the pathway carbohydrate degradation; glycolysis; pyruvate from D-glyceraldehyde 3-phosphate: step 2/5. This chain is Phosphoglycerate kinase, found in Campylobacter jejuni subsp. jejuni serotype O:23/36 (strain 81-176).